Here is a 77-residue protein sequence, read N- to C-terminus: Beta-defensin 135 (77 aa).

The signal sequence occupies residues 1–24 (MATRSVLLALVVLNLLFYVPPGRS). 3 cysteine pairs are disulfide-bonded: Cys37-Cys64, Cys44-Cys58, and Cys48-Cys65.

Belongs to the beta-defensin family.

It is found in the secreted. Functionally, has antibacterial activity. This chain is Beta-defensin 135 (DEFB135), found in Homo sapiens (Human).